The sequence spans 348 residues: Dihydroorotase (348 aa).

Zn(2+) is bound by residues His17 and His19. Substrate contacts are provided by residues 19-21 (HLR) and Asn45. Zn(2+) contacts are provided by Lys103, His140, and His178. Lys103 carries the post-translational modification N6-carboxylysine. His140 serves as a coordination point for substrate. Leu223 is a binding site for substrate. Asp251 contributes to the Zn(2+) binding site. The active site involves Asp251. Substrate contacts are provided by His255 and Ala267.

The protein belongs to the metallo-dependent hydrolases superfamily. DHOase family. Class II DHOase subfamily. Homodimer. It depends on Zn(2+) as a cofactor.

It carries out the reaction (S)-dihydroorotate + H2O = N-carbamoyl-L-aspartate + H(+). It participates in pyrimidine metabolism; UMP biosynthesis via de novo pathway; (S)-dihydroorotate from bicarbonate: step 3/3. Its function is as follows. Catalyzes the reversible cyclization of carbamoyl aspartate to dihydroorotate. In Escherichia coli O7:K1 (strain IAI39 / ExPEC), this protein is Dihydroorotase.